The sequence spans 193 residues: Oligoribonuclease (193 aa).

The region spanning 8-171 is the Exonuclease domain; sequence LVWLDLEMTG…EDIRESVAEL (164 aa). Tyr-129 is an active-site residue.

This sequence belongs to the oligoribonuclease family.

It is found in the cytoplasm. 3'-to-5' exoribonuclease specific for small oligoribonucleotides. The polypeptide is Oligoribonuclease (Alkalilimnicola ehrlichii (strain ATCC BAA-1101 / DSM 17681 / MLHE-1)).